We begin with the raw amino-acid sequence, 274 residues long: Lipoprotein E (274 aa).

The first 20 residues, 1–20 (MKTTLKMTALAALSAFVLAG), serve as a signal peptide directing secretion. A lipid anchor (N-palmitoyl cysteine) is attached at Cys21. A lipid anchor (S-diacylglycerol cysteine) is attached at Cys21.

The protein localises to the cell outer membrane. The protein is Lipoprotein E (hel) of Haemophilus influenzae (strain ATCC 51907 / DSM 11121 / KW20 / Rd).